The sequence spans 317 residues: Ferrochelatase (317 aa).

His-187 and Glu-268 together coordinate Fe cation.

It belongs to the ferrochelatase family.

Its subcellular location is the cytoplasm. The catalysed reaction is heme b + 2 H(+) = protoporphyrin IX + Fe(2+). It participates in porphyrin-containing compound metabolism; protoheme biosynthesis; protoheme from protoporphyrin-IX: step 1/1. Catalyzes the ferrous insertion into protoporphyrin IX. This chain is Ferrochelatase, found in Campylobacter concisus (strain 13826).